The sequence spans 263 residues: Protein M1425_2021 (263 aa).

Belongs to the CinA family.

In Saccharolobus islandicus (strain M.14.25 / Kamchatka #1) (Sulfolobus islandicus), this protein is Protein M1425_2021.